The chain runs to 440 residues: uncharacterized protein (440 aa).

The signal sequence occupies residues methionine 1–alanine 19.

This is an uncharacterized protein from Rickettsia typhi (strain ATCC VR-144 / Wilmington).